Here is a 344-residue protein sequence, read N- to C-terminus: Autoinducer 2 import system permease protein LsrC (344 aa).

A run of 9 helical transmembrane segments spans residues 13 to 33, 38 to 58, 69 to 89, 90 to 110, 114 to 134, 155 to 175, 212 to 232, 251 to 271, and 283 to 303; these read FFAIVALFVVLVALNPAYFIL, MIFASSQILCLLALGATLVML, TVGLCAIAVGVALNYGYGLAT, AIAFALAIGALAGAFNGLLVV, IPAIVATLGTLGLYRGVMLLW, FIGVSPLGWLVLALLLAGGWL, LNGMLAACAGIVFAAQIGFVP, GISLLGGTGTLLGAFLGAFFL, and LPAWWNDFIAGLVLLGVLVLD. The segment at 323–344 is disordered; the sequence is QPGNKGSKQVARFPERKSKEVA. Positions 335–344 are enriched in basic and acidic residues; that stretch reads FPERKSKEVA.

It belongs to the binding-protein-dependent transport system permease family. AraH/RbsC subfamily. The complex is composed of two ATP-binding proteins (LsrA), two transmembrane proteins (LsrC and LsrD) and a solute-binding protein (LsrB).

Its subcellular location is the cell inner membrane. Its function is as follows. Part of the ABC transporter complex LsrABCD involved in autoinducer 2 (AI-2) import. Probably responsible for the translocation of the substrate across the membrane. The polypeptide is Autoinducer 2 import system permease protein LsrC (lsrC) (Klebsiella pneumoniae subsp. pneumoniae (strain ATCC 700721 / MGH 78578)).